The sequence spans 365 residues: Aspartate-semialdehyde dehydrogenase (365 aa).

Residues T13, G14, S15, V16, S38, S41, L85, and D86 each coordinate NADP(+). T13 bears the Phosphothreonine mark. Residue C156 is the Acyl-thioester intermediate of the active site. Residue G188 coordinates NADP(+). The Proton acceptor role is filled by H256. Phosphoserine occurs at positions 318 and 323. N343 lines the NADP(+) pocket.

It belongs to the aspartate-semialdehyde dehydrogenase family. As to quaternary structure, homotetramer.

It is found in the cytoplasm. Its subcellular location is the cytosol. The protein localises to the nucleus. It carries out the reaction L-aspartate 4-semialdehyde + phosphate + NADP(+) = 4-phospho-L-aspartate + NADPH + H(+). It functions in the pathway amino-acid biosynthesis; L-methionine biosynthesis via de novo pathway; L-homoserine from L-aspartate: step 2/3. Its pathway is amino-acid biosynthesis; L-threonine biosynthesis; L-threonine from L-aspartate: step 2/5. Functionally, catalyzes the NADPH-dependent formation of L-aspartate 4-semialdehyde (L-ASA) by the reductive dephosphorylation of 4-phospho-L-aspartate. Mediates the second step in the biosynthesis of amino acids that derive from aspartate (the aspartate family of amino acids), including methioinine and threonine, the latter of which is a precursor to isoleucine. The protein is Aspartate-semialdehyde dehydrogenase (HOM2) of Saccharomyces cerevisiae (strain ATCC 204508 / S288c) (Baker's yeast).